A 138-amino-acid chain; its full sequence is Large ribosomal subunit protein eL32 (138 aa).

The protein belongs to the eukaryotic ribosomal protein eL32 family.

The polypeptide is Large ribosomal subunit protein eL32 (Saccharolobus islandicus (strain Y.N.15.51 / Yellowstone #2) (Sulfolobus islandicus)).